A 460-amino-acid polypeptide reads, in one-letter code: T-box transcription factor TBX1 (460 aa).

Disordered stretches follow at residues 30–53 (LNTPGSYHLSPSPGDPYSHHESQF) and 67–99 (GSNSAQAPAQGDSGTSNCSSSSSSSTPNKTLVK). Residues 67–84 (GSNSAQAPAQGDSGTSNC) show a composition bias toward polar residues. Residues 116-294 (LWDEFNQLGT…SNPFAKGFRD (179 aa)) constitute a DNA-binding region (T-box). Disordered regions lie at residues 317–355 (RTRNPMSSPPQQNGTEKEDSRREYDRDPSGNPLHSDPTH) and 376–400 (PLTAGPRSPPHELRLDGHPQPPDTL). Over residues 320–330 (NPMSSPPQQNG) the composition is skewed to polar residues. The segment covering 331–344 (TEKEDSRREYDRDP) has biased composition (basic and acidic residues). Residues 418-429 (KTRPSPYPSPSI) carry the Nuclear localization signal motif.

As to quaternary structure, binds DNA as a dimer. In terms of tissue distribution, expressed in the ear and mesendodermal components of pharyngeal arches.

Its subcellular location is the nucleus. Probable transcriptional regulator involved in developmental processes. Binds to the palindromic T site 5'-TTCACACCTAGGTGTGAA-3' DNA sequence. Is required for normal development of the pharyngeal arch arteries. Acts cell autonomously in the pharyngeal mesendoderm and influences the development of neural crest-derived cartilages secondarily. The protein is T-box transcription factor TBX1 (tbx1) of Danio rerio (Zebrafish).